Here is a 447-residue protein sequence, read N- to C-terminus: Zinc finger protein ZIC 1 (447 aa).

The C2H2-type 1; atypical zinc-finger motif lies at 225 to 260 (LICKWIEPEQLANPKKSCNKTFSTMHELVTHVTVEH). The segment at 269–296 (HICFWEECPREGKPFKAKYKLVNHIRVH) adopts a C2H2-type 2; atypical zinc-finger fold. 3 consecutive C2H2-type zinc fingers follow at residues 302-326 (FPCP…KRTH), 332-356 (FKCE…MHVH), and 362-384 (YLCK…MKVH). Residues 375–434 (SSLRKHMKVHESSSQGSQPSPAASSGYESSTPPTIVSPTTDNPTTSSMSPSSSAVHHTAG) are disordered. The span at 386–427 (SSSQGSQPSPAASSGYESSTPPTIVSPTTDNPTTSSMSPSSS) shows a compositional bias: low complexity.

The protein belongs to the GLI C2H2-type zinc-finger protein family. In terms of assembly, interacts (via the C2H2-type domains 3, 4 and 5) with MDFIC (via the C2H2-type domains 3, 4 and 5). Interacts with GLI1; the interaction enhances transcription activation. Interacts with GLI2. Interacts with GLI3; the interaction enhances transcription activation. In terms of tissue distribution, expressed in osteoblasts (at protein level). Expressed in the CNS. A high level expression is seen in the cerebellum, while a low level expression is seen in the olfactory bulb, diencephalon, and brainstem. Expressed in lumbar spine and iliac crest.

The protein resides in the nucleus. Its subcellular location is the cytoplasm. Acts as a transcriptional activator. Involved in neurogenesis. Plays important roles in the early stage of organogenesis of the CNS, as well as during dorsal spinal cord development and maturation of the cerebellum. Involved in the spatial distribution of mossy fiber (MF) neurons within the pontine gray nucleus (PGN). Plays a role in the regulation of MF axon pathway choice. Promotes MF migration towards ipsilaterally-located cerebellar territories. May have a role in shear flow mechanotransduction in osteocytes. Retains nuclear GLI1 and GLI3 in the cytoplasm. Binds to the minimal GLI-consensus sequence 5'-TGGGTGGTC-3'. The polypeptide is Zinc finger protein ZIC 1 (Zic1) (Mus musculus (Mouse)).